The chain runs to 261 residues: Small ribosomal subunit protein eS4 (261 aa).

In terms of domain architecture, S4 RNA-binding spans 42–104 (LPLVIFLRNR…TGEFFRLIYD (63 aa)).

Belongs to the eukaryotic ribosomal protein eS4 family.

In Carabus granulatus (Ground beetle), this protein is Small ribosomal subunit protein eS4 (RpS4).